Reading from the N-terminus, the 259-residue chain is MGSKTLPAPVPIHPSLQLTNYSFLQAFNGLPVPAEHVPNLYGFSALHAVHLHQWTLGYPTLHLPRSSFSKVPGVSSLVDSRFQIPTFPLFPHMIHPKQESPNLSNKTKPRFDFANLAVAATQEDHCKLGLMNDQGSPPAMGGLLDVTKLTPEKKPTRGRLPSKTKKEFVCKFCGRHFTKSYNLLIHERTHTDERPYTCDICHKAFRRQDHLRDHRYIHSKEKPFKCQECGKGFCQSRTLAVHKTLHTQVKELKPSKIKC.

C2H2-type zinc fingers lie at residues 168–190 (FVCKFCGRHFTKSYNLLIHERTH), 196–218 (YTCDICHKAFRRQDHLRDHRYIH), and 224–246 (FKCQECGKGFCQSRTLAVHKTLH).

This sequence belongs to the Odd C2H2-type zinc-finger protein family. As to expression, at early gastrula stage, expressed in the involuting mesoderm and endoderm. During neurulation, expressed in the pronephric primordium, following expression of osr2. During tailbud (stage 35), expressed in the rectal diverticulum and in the kidney ducts.

Its subcellular location is the nucleus. In terms of biological role, transcriptional repressor. Required for pronephric kidney development. The protein is Protein odd-skipped-related 1 of Xenopus laevis (African clawed frog).